The following is a 103-amino-acid chain: Protein FMC1 homolog (103 aa).

Belongs to the FMC1 family.

The polypeptide is Protein FMC1 homolog (Nematostella vectensis (Starlet sea anemone)).